Consider the following 134-residue polypeptide: Large ribosomal subunit protein uL18 (134 aa).

This sequence belongs to the universal ribosomal protein uL18 family. As to quaternary structure, part of the 50S ribosomal subunit; part of the 5S rRNA/L5/L18/L25 subcomplex. Contacts the 5S and 23S rRNAs.

Functionally, this is one of the proteins that bind and probably mediate the attachment of the 5S RNA into the large ribosomal subunit, where it forms part of the central protuberance. The chain is Large ribosomal subunit protein uL18 from Corynebacterium efficiens (strain DSM 44549 / YS-314 / AJ 12310 / JCM 11189 / NBRC 100395).